An 89-amino-acid chain; its full sequence is Small ribosomal subunit protein bS20 (89 aa).

Residues 1–29 form a disordered region; sequence MTLANIKSAKKRAVQSEKRRQHNASQRSM.

It belongs to the bacterial ribosomal protein bS20 family.

Functionally, binds directly to 16S ribosomal RNA. The protein is Small ribosomal subunit protein bS20 of Haemophilus influenzae (strain 86-028NP).